We begin with the raw amino-acid sequence, 229 residues long: uncharacterized protein (229 aa).

An ABC transporter domain is found at 2-229; sequence LTLNNISKSY…LDERGDISHA (228 aa). 38–45 contributes to the ATP binding site; that stretch reads GPSGSGKS.

This sequence belongs to the ABC transporter superfamily.

This is an uncharacterized protein from Bacillus subtilis (strain 168).